The chain runs to 437 residues: Ribosomal protein uS12 methylthiotransferase RimO (437 aa).

The region spanning Pro4–Pro114 is the MTTase N-terminal domain. [4Fe-4S] cluster contacts are provided by Cys13, Cys49, Cys78, Cys145, Cys149, and Cys152. A Radical SAM core domain is found at Leu131 to Asn369. The TRAM domain occupies Lys372–Val437.

It belongs to the methylthiotransferase family. RimO subfamily. [4Fe-4S] cluster is required as a cofactor.

The protein resides in the cytoplasm. It carries out the reaction L-aspartate(89)-[ribosomal protein uS12]-hydrogen + (sulfur carrier)-SH + AH2 + 2 S-adenosyl-L-methionine = 3-methylsulfanyl-L-aspartate(89)-[ribosomal protein uS12]-hydrogen + (sulfur carrier)-H + 5'-deoxyadenosine + L-methionine + A + S-adenosyl-L-homocysteine + 2 H(+). Catalyzes the methylthiolation of an aspartic acid residue of ribosomal protein uS12. This chain is Ribosomal protein uS12 methylthiotransferase RimO, found in Brucella anthropi (strain ATCC 49188 / DSM 6882 / CCUG 24695 / JCM 21032 / LMG 3331 / NBRC 15819 / NCTC 12168 / Alc 37) (Ochrobactrum anthropi).